Here is a 248-residue protein sequence, read N- to C-terminus: Metallo-beta-lactamase type 2 (248 aa).

The first 21 residues, 1 to 21 (MKGLKGLLVLALGFTGLQVFG), serve as a signal peptide directing secretion. 5 residues coordinate Zn(2+): His97, His99, Asp101, His160, and Cys179. Lys182 contributes to the substrate binding site. Position 221 (His221) interacts with Zn(2+).

The protein belongs to the metallo-beta-lactamase superfamily. Class-B beta-lactamase family. As to quaternary structure, monomer. Requires Zn(2+) as cofactor.

It is found in the periplasm. The catalysed reaction is a beta-lactam + H2O = a substituted beta-amino acid. Confers resistance to the different beta-lactams antibiotics (penicillin, cephalosporin and carbapenem) via the hydrolysis of the beta-lactam ring. In Elizabethkingia meningoseptica (Chryseobacterium meningosepticum), this protein is Metallo-beta-lactamase type 2 (blaB8).